The chain runs to 683 residues: Probable metal-nicotianamine transporter YSL3 (683 aa).

14 helical membrane-spanning segments follow: residues 29-49 (LVTP…CFVG), 58-78 (IVPA…KWLI), 97-117 (MFLL…GFAT), 142-162 (HVPI…GVLI), 204-224 (VATI…QWFY), 265-285 (IVNF…YPFL), 309-329 (VFIS…TLIT), 372-392 (IPIP…TIAI), 404-424 (LAVL…ATGL), 448-468 (PGAV…LHIS), 490-510 (TGQI…FLAF), 553-573 (CMTF…VVLV), 595-615 (FFAG…LLAW), and 628-648 (SAVA…SALL).

Belongs to the YSL (TC 2.A.67.2) family.

It localises to the membrane. Functionally, may be involved in the transport of nicotianamine-chelated metals. The chain is Probable metal-nicotianamine transporter YSL3 (YSL3) from Oryza sativa subsp. japonica (Rice).